The chain runs to 552 residues: CTP synthase (552 aa).

Residues 1 to 267 are amidoligase domain; sequence MAKFIFVTGG…AEQTLKLLRM (267 aa). Ser-13 provides a ligand contact to CTP. Position 13 (Ser-13) interacts with UTP. ATP is bound by residues 14 to 19 and Asp-71; that span reads SIGKGI. Residues Asp-71 and Glu-141 each coordinate Mg(2+). CTP contacts are provided by residues 148 to 150, 188 to 193, and Lys-224; these read DIE and KTKPTQ. UTP-binding positions include 188-193 and Lys-224; that span reads KTKPTQ. The Glutamine amidotransferase type-1 domain occupies 292-534; that stretch reads DIAIVGKYVQ…IQAAGNHKSQ (243 aa). Gly-354 is a binding site for L-glutamine. Cys-381 (nucleophile; for glutamine hydrolysis) is an active-site residue. L-glutamine is bound by residues 382-385, Glu-405, and Arg-462; that span reads LGMQ. Residues His-507 and Glu-509 contribute to the active site. The disordered stretch occupies residues 533–552; that stretch reads SQPISDELDNQSTEMSISLS.

The protein belongs to the CTP synthase family. Homotetramer.

It catalyses the reaction UTP + L-glutamine + ATP + H2O = CTP + L-glutamate + ADP + phosphate + 2 H(+). The catalysed reaction is L-glutamine + H2O = L-glutamate + NH4(+). It carries out the reaction UTP + NH4(+) + ATP = CTP + ADP + phosphate + 2 H(+). It functions in the pathway pyrimidine metabolism; CTP biosynthesis via de novo pathway; CTP from UDP: step 2/2. Its activity is regulated as follows. Allosterically activated by GTP, when glutamine is the substrate; GTP has no effect on the reaction when ammonia is the substrate. The allosteric effector GTP functions by stabilizing the protein conformation that binds the tetrahedral intermediate(s) formed during glutamine hydrolysis. Inhibited by the product CTP, via allosteric rather than competitive inhibition. In terms of biological role, catalyzes the ATP-dependent amination of UTP to CTP with either L-glutamine or ammonia as the source of nitrogen. Regulates intracellular CTP levels through interactions with the four ribonucleotide triphosphates. The polypeptide is CTP synthase (Picosynechococcus sp. (strain ATCC 27264 / PCC 7002 / PR-6) (Agmenellum quadruplicatum)).